The chain runs to 143 residues: Large ribosomal subunit protein uL11 (143 aa).

This sequence belongs to the universal ribosomal protein uL11 family. Part of the ribosomal stalk of the 50S ribosomal subunit. Interacts with L10 and the large rRNA to form the base of the stalk. L10 forms an elongated spine to which L12 dimers bind in a sequential fashion forming a multimeric L10(L12)X complex. One or more lysine residues are methylated.

In terms of biological role, forms part of the ribosomal stalk which helps the ribosome interact with GTP-bound translation factors. This is Large ribosomal subunit protein uL11 from Leptothrix cholodnii (strain ATCC 51168 / LMG 8142 / SP-6) (Leptothrix discophora (strain SP-6)).